We begin with the raw amino-acid sequence, 337 residues long: UPF0284 protein AF_0276 (337 aa).

It belongs to the UPF0284 family.

The polypeptide is UPF0284 protein AF_0276 (Archaeoglobus fulgidus (strain ATCC 49558 / DSM 4304 / JCM 9628 / NBRC 100126 / VC-16)).